A 456-amino-acid polypeptide reads, in one-letter code: tRNA-2-methylthio-N(6)-dimethylallyladenosine synthase (456 aa).

Residues 18 to 134 (KKLFIETYGC…LPDLVASVEA (117 aa)) form the MTTase N-terminal domain. The [4Fe-4S] cluster site is built by Cys-27, Cys-63, Cys-98, Cys-172, Cys-176, and Cys-179. Residues 158 to 390 (CGNHISGFVS…IELQNRLSAE (233 aa)) enclose the Radical SAM core domain. Residues 393-456 (ARDVGKTFEV…SATLKGEEVF (64 aa)) enclose the TRAM domain.

The protein belongs to the methylthiotransferase family. MiaB subfamily. In terms of assembly, monomer. It depends on [4Fe-4S] cluster as a cofactor.

It localises to the cytoplasm. It catalyses the reaction N(6)-dimethylallyladenosine(37) in tRNA + (sulfur carrier)-SH + AH2 + 2 S-adenosyl-L-methionine = 2-methylsulfanyl-N(6)-dimethylallyladenosine(37) in tRNA + (sulfur carrier)-H + 5'-deoxyadenosine + L-methionine + A + S-adenosyl-L-homocysteine + 2 H(+). Catalyzes the methylthiolation of N6-(dimethylallyl)adenosine (i(6)A), leading to the formation of 2-methylthio-N6-(dimethylallyl)adenosine (ms(2)i(6)A) at position 37 in tRNAs that read codons beginning with uridine. In Phocaeicola vulgatus (strain ATCC 8482 / DSM 1447 / JCM 5826 / CCUG 4940 / NBRC 14291 / NCTC 11154) (Bacteroides vulgatus), this protein is tRNA-2-methylthio-N(6)-dimethylallyladenosine synthase.